Here is a 79-residue protein sequence, read N- to C-terminus: D-alanyl carrier protein (79 aa).

Positions 1–77 (MDIKSEVLAI…KIVAGVTELC (77 aa)) constitute a Carrier domain. Ser-35 is modified (O-(pantetheine 4'-phosphoryl)serine).

This sequence belongs to the DltC family. In terms of processing, 4'-phosphopantetheine is transferred from CoA to a specific serine of apo-DCP.

The protein localises to the cytoplasm. It participates in cell wall biogenesis; lipoteichoic acid biosynthesis. Functionally, carrier protein involved in the D-alanylation of lipoteichoic acid (LTA). The loading of thioester-linked D-alanine onto DltC is catalyzed by D-alanine--D-alanyl carrier protein ligase DltA. The DltC-carried D-alanyl group is further transferred to cell membrane phosphatidylglycerol (PG) by forming an ester bond, probably catalyzed by DltD. D-alanylation of LTA plays an important role in modulating the properties of the cell wall in Gram-positive bacteria, influencing the net charge of the cell wall. This is D-alanyl carrier protein from Streptococcus agalactiae serotype Ia (strain ATCC 27591 / A909 / CDC SS700).